The chain runs to 74 residues: Small ribosomal subunit protein eS28 (74 aa).

The protein belongs to the eukaryotic ribosomal protein eS28 family.

This is Small ribosomal subunit protein eS28 from Halobacterium salinarum (strain ATCC 29341 / DSM 671 / R1).